The sequence spans 533 residues: Probable protein kinase UbiB (533 aa).

Residues 24-44 (LILELPMLPWWLRLLGAALPW) form a helical membrane-spanning segment. One can recognise a Protein kinase domain in the interval 126–494 (RFEREPLASA…WKSSRHDWLG (369 aa)). Residues 132-140 (LASASVAQV) and lysine 154 each bind ATP. Aspartate 289 acts as the Proton acceptor in catalysis. The chain crosses the membrane as a helical span at residues 510–530 (LGQQLEAWPAWVMLAGGVFLI).

The protein belongs to the ABC1 family. UbiB subfamily.

The protein localises to the cell inner membrane. The protein operates within cofactor biosynthesis; ubiquinone biosynthesis [regulation]. Functionally, is probably a protein kinase regulator of UbiI activity which is involved in aerobic coenzyme Q (ubiquinone) biosynthesis. In Pseudomonas paraeruginosa (strain DSM 24068 / PA7) (Pseudomonas aeruginosa (strain PA7)), this protein is Probable protein kinase UbiB.